The following is a 274-amino-acid chain: Orotidine 5'-phosphate decarboxylase (274 aa).

Substrate is bound by residues Asp40, 62–64, 93–102, Tyr227, and Arg245; these read KTH and DRKFVDIGNT. Lys95 acts as the Proton donor in catalysis.

This sequence belongs to the OMP decarboxylase family.

The catalysed reaction is orotidine 5'-phosphate + H(+) = UMP + CO2. Its pathway is pyrimidine metabolism; UMP biosynthesis via de novo pathway; UMP from orotate: step 2/2. The sequence is that of Orotidine 5'-phosphate decarboxylase (URA3) from Coccidioides immitis (strain RS) (Valley fever fungus).